A 430-amino-acid chain; its full sequence is mRNA cap guanine-N(7) methyltransferase (430 aa).

Residues 1–88 (MALRPEKPVW…YDLEERKKKQ (88 aa)) form a disordered region. Positions 15-37 (QYDRQYGKLEEPKPPREESKPGD) are enriched in basic and acidic residues. The mRNA cap 0 methyltransferase domain maps to 136-419 (SPIIKLRNFN…FYTVFAFRKV (284 aa)). 145 to 146 (NN) serves as a coordination point for mRNA. Residues K149, G167, D189, D218, Q244, and Y249 each coordinate S-adenosyl-L-methionine.

This sequence belongs to the class I-like SAM-binding methyltransferase superfamily. mRNA cap 0 methyltransferase family.

The protein localises to the nucleus. The enzyme catalyses a 5'-end (5'-triphosphoguanosine)-ribonucleoside in mRNA + S-adenosyl-L-methionine = a 5'-end (N(7)-methyl 5'-triphosphoguanosine)-ribonucleoside in mRNA + S-adenosyl-L-homocysteine. In terms of biological role, responsible for methylating the 5'-cap structure of mRNAs. The protein is mRNA cap guanine-N(7) methyltransferase (ABD1) of Eremothecium gossypii (strain ATCC 10895 / CBS 109.51 / FGSC 9923 / NRRL Y-1056) (Yeast).